A 258-amino-acid chain; its full sequence is Undecaprenyl-diphosphatase (258 aa).

8 helical membrane-spanning segments follow: residues 14-34, 39-59, 79-99, 106-126, 136-156, 176-196, 209-229, and 237-257; these read AAGEFLPISSSAHLVLMPWLL, QGLTYDIFLHLATLIAVLIYF, GKILWLLVLGTIPAAICGVLF, VFRSPFVIAAALIVFAVILHL, VALNVKTVLIIGCAQALALMP, AESAKISFLLSTPIIAGAAVL, AFIAGFLTAAIFGWLFIKFLM, and FNIFVVYRIALGVIIIITALM.

The protein belongs to the UppP family.

The protein localises to the cell membrane. The enzyme catalyses di-trans,octa-cis-undecaprenyl diphosphate + H2O = di-trans,octa-cis-undecaprenyl phosphate + phosphate + H(+). Functionally, catalyzes the dephosphorylation of undecaprenyl diphosphate (UPP). Confers resistance to bacitracin. This is Undecaprenyl-diphosphatase from Elusimicrobium minutum (strain Pei191).